The following is a 166-amino-acid chain: Interferon gamma (166 aa).

The N-terminal stretch at 1–23 (MKYTSYILAFQLCIVLGSLGCYC) is a signal peptide. Glutamine 24 is modified (pyrrolidone carboxylic acid). 3 N-linked (GlcNAc...) asparagine glycosylation sites follow: asparagine 48, asparagine 86, and asparagine 120.

This sequence belongs to the type II (or gamma) interferon family. Homodimer. Interacts with IFNGR1 (via extracellular domain); this interaction promotes IFNGR1 dimerization. As to expression, released primarily from activated T lymphocytes.

The protein localises to the secreted. Type II interferon produced by immune cells such as T-cells and NK cells that plays crucial roles in antimicrobial, antiviral, and antitumor responses by activating effector immune cells and enhancing antigen presentation. Primarily signals through the JAK-STAT pathway after interaction with its receptor IFNGR1 to affect gene regulation. Upon IFNG binding, IFNGR1 intracellular domain opens out to allow association of downstream signaling components JAK2, JAK1 and STAT1, leading to STAT1 activation, nuclear translocation and transcription of IFNG-regulated genes. Many of the induced genes are transcription factors such as IRF1 that are able to further drive regulation of a next wave of transcription. Plays a role in class I antigen presentation pathway by inducing a replacement of catalytic proteasome subunits with immunoproteasome subunits. In turn, increases the quantity, quality, and repertoire of peptides for class I MHC loading. Increases the efficiency of peptide generation also by inducing the expression of activator PA28 that associates with the proteasome and alters its proteolytic cleavage preference. Up-regulates as well MHC II complexes on the cell surface by promoting expression of several key molecules such as cathepsins B/CTSB, H/CTSH, and L/CTSL. Participates in the regulation of hematopoietic stem cells during development and under homeostatic conditions by affecting their development, quiescence, and differentiation. The sequence is that of Interferon gamma (IFNG) from Saimiri sciureus (Common squirrel monkey).